A 221-amino-acid polypeptide reads, in one-letter code: Transcription antitermination protein NusB (221 aa).

It belongs to the NusB family.

Functionally, involved in transcription antitermination. Required for transcription of ribosomal RNA (rRNA) genes. Binds specifically to the boxA antiterminator sequence of the ribosomal RNA (rrn) operons. The chain is Transcription antitermination protein NusB from Synechocystis sp. (strain ATCC 27184 / PCC 6803 / Kazusa).